Reading from the N-terminus, the 200-residue chain is Methyl-coenzyme M reductase I operon protein C (200 aa).

MCR is composed of three subunits: alpha, beta, and gamma. The function of proteins C and D is not known.

This chain is Methyl-coenzyme M reductase I operon protein C (mcrC), found in Methanocaldococcus jannaschii (strain ATCC 43067 / DSM 2661 / JAL-1 / JCM 10045 / NBRC 100440) (Methanococcus jannaschii).